The primary structure comprises 28 residues: Dermaseptin-SP1 (28 aa).

Expressed by the skin glands.

The protein resides in the secreted. Its function is as follows. Probable antimicrobial peptide which stimulates insulin-release in glucose-responsive BRIN-BD 11 cells. The protein is Dermaseptin-SP1 of Agalychnis spurrelli (Gliding leaf frog).